The primary structure comprises 178 residues: Neuroblastoma suppressor of tumorigenicity 1 (178 aa).

The N-terminal stretch at Met-1–Ala-16 is a signal peptide. 5 disulfides stabilise this stretch: Cys-34–Cys-84, Cys-48–Cys-98, Cys-58–Cys-117, Cys-62–Cys-119, and Cys-81–Cys-122. Residues Cys-34–Gly-123 enclose the CTCK domain. The segment at Asn-132–Asp-178 is disordered. The span at Ser-140–Pro-160 shows a compositional bias: low complexity.

The protein belongs to the DAN family. In terms of assembly, homodimer.

Its subcellular location is the secreted. Functionally, possible candidate as a tumor suppressor gene of neuroblastoma. May play an important role in preventing cells from entering the final stage (G1/S) of the transformation process. The protein is Neuroblastoma suppressor of tumorigenicity 1 (Nbl1) of Mus musculus (Mouse).